A 662-amino-acid polypeptide reads, in one-letter code: U6 snRNA-specific terminal uridylyltransferase (662 aa).

Mg(2+)-binding residues include Asp183 and Asp185. Positions 384 to 437 (CKFFRELFKYYANFDFTNKAIYGKKAMQKKTLSSAHGGVEESPLMLMDPMDITH) constitute a PAP-associated domain.

The protein belongs to the DNA polymerase type-B-like family. In terms of assembly, forms a complex composed of sart-3, terminal uridylyltransferase usip-1 and U6 snRNA; complex formation is mediated by usip-1 and sart-3 binding to U6 snRNA. It depends on Mg(2+) as a cofactor. The cofactor is Mn(2+). Ubiquitously expressed.

It localises to the nucleus. It is found in the nucleoplasm. It catalyses the reaction RNA(n) + UTP = RNA(n)-3'-uridine ribonucleotide + diphosphate. In terms of biological role, acts as a specific terminal uridylyltransferase for U6 snRNA. Responsible for the addition of UTP at the 3' end of U6 snRNA which stabilizes U6 snRNA. Does not have activity towards modified uridine containing 3'-monophosphorylation or 2'-O-methylation. This is U6 snRNA-specific terminal uridylyltransferase from Caenorhabditis elegans.